The following is a 244-amino-acid chain: 7-cyano-7-deazaguanine synthase (244 aa).

14-24 (FSGGQDSATCV) contacts ATP. Positions 202, 217, 220, and 223 each coordinate Zn(2+).

The protein belongs to the QueC family. Requires Zn(2+) as cofactor.

It carries out the reaction 7-carboxy-7-deazaguanine + NH4(+) + ATP = 7-cyano-7-deazaguanine + ADP + phosphate + H2O + H(+). The protein operates within purine metabolism; 7-cyano-7-deazaguanine biosynthesis. Catalyzes the ATP-dependent conversion of 7-carboxy-7-deazaguanine (CDG) to 7-cyano-7-deazaguanine (preQ(0)). In Burkholderia lata (strain ATCC 17760 / DSM 23089 / LMG 22485 / NCIMB 9086 / R18194 / 383), this protein is 7-cyano-7-deazaguanine synthase.